Consider the following 449-residue polypeptide: MNPNQKIITIGSICMVIGIVSLMLQIGNMISIWVSHSIQTGNQHQAEPISNTNFLTEKAVASVTLAGNSSLCPISGWAVHSKDNSIRIGSKGDVFVIREPFISCSHLECRTFFLTQGALLNDKHSNGTVKDRSPHRTLMSCPVGEAPSPYNSRFESVAWSASACHDGTSWLTIGISGPDNGAVAVLKYNGIITDTIKSWRNNILRTQESECACVNGSCFTVMTDGPSNGQASYKIFKMEKGKVVKSVELDAPNYHYEECSCYPDAGEITCVCRDNWHGSNRPWVSFNQNLEYQIGYICSGVFGDNPRPNDGTGSCGPVSPNGAYGVKGFSFKYGNGVWIGRTKSTNSRSGFEMIWDPNGWTGTDSSFSVKQDIVAITDWSGYSGSFVQHPELTGLDCIRPCFWVELIRGRPKESTIWTSGSSISFCGVNSDTVGWSWPDGAELPFTIDK.

The Intravirion segment spans residues 1–6 (MNPNQK). The helical transmembrane segment at 7-27 (IITIGSICMVIGIVSLMLQIG) threads the bilayer. The interval 11 to 33 (GSICMVIGIVSLMLQIGNMISIW) is involved in apical transport and lipid raft association. Residues 28-449 (NMISIWVSHS…GAELPFTIDK (422 aa)) lie on the Virion surface side of the membrane. Residues 36–70 (HSIQTGNQHQAEPISNTNFLTEKAVASVTLAGNSS) are hypervariable stalk region. An N-linked (GlcNAc...) asparagine; by host glycan is attached at Asn68. The interval 71 to 449 (LCPISGWAVH…GAELPFTIDK (379 aa)) is head of neuraminidase. 8 disulfide bridges follow: Cys72–Cys397, Cys104–Cys109, Cys164–Cys211, Cys213–Cys218, Cys259–Cys272, Cys261–Cys270, Cys298–Cys315, and Cys401–Cys426. Arg98 is a substrate binding site. Asn126 is a glycosylation site (N-linked (GlcNAc...) asparagine; by host). The active-site Proton donor/acceptor is Asp131. A substrate-binding site is contributed by Arg132. N-linked (GlcNAc...) asparagine; by host glycosylation is present at Asn215. 257 to 258 (EE) is a binding site for substrate. Arg273 is a substrate binding site. Residues Asp274, Gly278, and Asp304 each contribute to the Ca(2+) site. Position 348 (Arg348) interacts with substrate. The Nucleophile role is filled by Tyr382.

This sequence belongs to the glycosyl hydrolase 34 family. Homotetramer. Ca(2+) serves as cofactor. In terms of processing, N-glycosylated.

The protein resides in the virion membrane. It is found in the host apical cell membrane. The catalysed reaction is Hydrolysis of alpha-(2-&gt;3)-, alpha-(2-&gt;6)-, alpha-(2-&gt;8)- glycosidic linkages of terminal sialic acid residues in oligosaccharides, glycoproteins, glycolipids, colominic acid and synthetic substrates.. With respect to regulation, inhibited by the neuraminidase inhibitors zanamivir (Relenza) and oseltamivir (Tamiflu). These drugs interfere with the release of progeny virus from infected cells and are effective against all influenza strains. Resistance to neuraminidase inhibitors is quite rare. In terms of biological role, catalyzes the removal of terminal sialic acid residues from viral and cellular glycoconjugates. Cleaves off the terminal sialic acids on the glycosylated HA during virus budding to facilitate virus release. Additionally helps virus spread through the circulation by further removing sialic acids from the cell surface. These cleavages prevent self-aggregation and ensure the efficient spread of the progeny virus from cell to cell. Otherwise, infection would be limited to one round of replication. Described as a receptor-destroying enzyme because it cleaves a terminal sialic acid from the cellular receptors. May facilitate viral invasion of the upper airways by cleaving the sialic acid moieties on the mucin of the airway epithelial cells. Likely to plays a role in the budding process through its association with lipid rafts during intracellular transport. May additionally display a raft-association independent effect on budding. Plays a role in the determination of host range restriction on replication and virulence. Sialidase activity in late endosome/lysosome traffic seems to enhance virus replication. The sequence is that of Neuraminidase from Influenza A virus (strain A/Chicken/Hong Kong/96.1/2002 H5N1 genotype Y).